The following is a 518-amino-acid chain: Glutamate--cysteine ligase (518 aa).

The protein belongs to the glutamate--cysteine ligase type 1 family. Type 1 subfamily.

It carries out the reaction L-cysteine + L-glutamate + ATP = gamma-L-glutamyl-L-cysteine + ADP + phosphate + H(+). It participates in sulfur metabolism; glutathione biosynthesis; glutathione from L-cysteine and L-glutamate: step 1/2. This is Glutamate--cysteine ligase from Shigella boydii serotype 4 (strain Sb227).